We begin with the raw amino-acid sequence, 158 residues long: UPF0262 protein Rsph17025_0594 (158 aa).

It belongs to the UPF0262 family.

In Cereibacter sphaeroides (strain ATCC 17025 / ATH 2.4.3) (Rhodobacter sphaeroides), this protein is UPF0262 protein Rsph17025_0594.